Reading from the N-terminus, the 208-residue chain is High frequency lysogenization protein HflD homolog (208 aa).

Belongs to the HflD family.

It localises to the cytoplasm. It is found in the cell inner membrane. The sequence is that of High frequency lysogenization protein HflD homolog from Pseudomonas putida (strain ATCC 700007 / DSM 6899 / JCM 31910 / BCRC 17059 / LMG 24140 / F1).